The sequence spans 892 residues: Translation initiation factor IF-2 (892 aa).

Disordered regions lie at residues 32-102 and 114-300; these read LAQA…PGDA and KAPE…KQAE. Positions 35-48 are enriched in polar residues; sequence AGSSDTKNSPASKA. The span at 139-166 shows a compositional bias: basic and acidic residues; that stretch reads QEEKKESSEETSPERVEETLIIRTRTEP. The segment covering 200–211 has biased composition (low complexity); it reads AASTEETTQQQP. Residues 212 to 224 show a composition bias toward polar residues; it reads RQNDAASYNNKQQ. Positions 225–238 are enriched in low complexity; it reads PSGTSSRPASSAPS. Residues 252 to 276 are compositionally biased toward basic and acidic residues; that stretch reads RGSERDRSKRSDESVKAFTGRDRYG. Residues 397-566 form the tr-type G domain; that stretch reads IRSPIVAFMG…ALQAEVLELK (170 aa). The G1 stretch occupies residues 406-413; the sequence is GHVDHGKT. GTP is bound at residue 406–413; it reads GHVDHGKT. Residues 431–435 form a G2 region; it reads AITQH. Residues 452-455 form a G3 region; that stretch reads DTPG. Residues 452 to 456 and 506 to 509 each bind GTP; these read DTPGH and NKCD. Residues 506–509 are G4; sequence NKCD. Residues 542-544 are G5; that stretch reads SAK.

Belongs to the TRAFAC class translation factor GTPase superfamily. Classic translation factor GTPase family. IF-2 subfamily.

The protein resides in the cytoplasm. Its function is as follows. One of the essential components for the initiation of protein synthesis. Protects formylmethionyl-tRNA from spontaneous hydrolysis and promotes its binding to the 30S ribosomal subunits. Also involved in the hydrolysis of GTP during the formation of the 70S ribosomal complex. In Chlamydia trachomatis serovar A (strain ATCC VR-571B / DSM 19440 / HAR-13), this protein is Translation initiation factor IF-2.